The sequence spans 314 residues: Olfactory receptor 1Q1 (314 aa).

Residues 1 to 25 lie on the Extracellular side of the membrane; it reads MDNSNWTSVSHFVLLGISTHPEEQI. An N-linked (GlcNAc...) asparagine glycan is attached at Asn5. A helical membrane pass occupies residues 26 to 49; the sequence is PLFLVFSLMYAINISGNLAIITLI. The Cytoplasmic segment spans residues 50-57; that stretch reads LSAPRLHI. A helical membrane pass occupies residues 58–79; it reads PMYIFLSNLALTDICFTSTTVP. At 80–100 the chain is on the extracellular side; sequence KMLQIIFSPTKVISYTGCLAQ. Residues Cys97 and Cys189 are joined by a disulfide bond. Residues 101-120 form a helical membrane-spanning segment; sequence TYFFICFAVMENFILAVMAY. The Cytoplasmic segment spans residues 121 to 139; it reads DRYIAICHPFHYTMILTRM. The chain crosses the membrane as a helical span at residues 140 to 158; sequence LCVKMVVMCHALSHLHAML. The Extracellular portion of the chain corresponds to 159 to 195; sequence HTFLIGQLIFCADNRIPHFFCDLYALMKISCTSTYLN. Residues 196-219 form a helical membrane-spanning segment; it reads TLMIHTEGAVVISGALAFITASYA. Over 220–236 the chain is Cytoplasmic; the sequence is CIILVVLRIPSAKGRWK. Residues 237–259 traverse the membrane as a helical segment; the sequence is TFSTCGSHLTVVAIFYGTLSWVY. The Extracellular segment spans residues 260 to 272; it reads FRPLSSYSVTKGR. Residues 273 to 292 traverse the membrane as a helical segment; it reads IITVVYTVVTPMLNPFIYSL. At 293-314 the chain is on the cytoplasmic side; it reads RNGDVKGGFMKWMSRMQTFFFR.

Belongs to the G-protein coupled receptor 1 family.

The protein localises to the cell membrane. Odorant receptor. The sequence is that of Olfactory receptor 1Q1 (OR1Q1) from Homo sapiens (Human).